The chain runs to 45 residues: Alpha-conotoxin-like Lp1.10 (45 aa).

Positions 1 to 27 (VVLGPASDGRNAAANVKAPDLIALTVR) are excised as a propeptide. 2 cysteine pairs are disulfide-bonded: Cys-30–Cys-36 and Cys-31–Cys-44. The lacks the Ser-Xaa-Pro motif that is crucial for potent interaction with nAChR stretch occupies residues 32–34 (HNA). The residue at position 44 (Cys-44) is a Cysteine amide.

Belongs to the conotoxin A superfamily. In terms of tissue distribution, expressed by the venom duct.

It is found in the secreted. Its function is as follows. Alpha-conotoxins act on postsynaptic membranes, they bind to the nicotinic acetylcholine receptors (nAChR) and thus inhibit them. Has possibly a distinct nAChR binding mode from other alpha-conotoxins, due to a different three residue motif (lacks the Ser-Xaa-Pro motif). The sequence is that of Alpha-conotoxin-like Lp1.10 from Conus leopardus (Leopard cone).